Consider the following 557-residue polypeptide: Potassium-transporting ATPase potassium-binding subunit (557 aa).

Transmembrane regions (helical) follow at residues 5–25 (GFLL…PLGS), 63–83 (LCAI…MLLG), 132–152 (GLTV…FALI), 170–190 (LLRI…LFFI), 253–273 (FVQM…FGEV), 283–303 (LLWA…WAEV), 329–349 (VLVS…AVIA), 356–376 (ALGG…FGGV), 379–399 (GLYG…LMIG), 416–436 (LTAL…ALAM), 484–504 (LLAF…MAIA), and 526–546 (LFVG…FIPA).

It belongs to the KdpA family. The system is composed of three essential subunits: KdpA, KdpB and KdpC.

It is found in the cell inner membrane. Part of the high-affinity ATP-driven potassium transport (or Kdp) system, which catalyzes the hydrolysis of ATP coupled with the electrogenic transport of potassium into the cytoplasm. This subunit binds the periplasmic potassium ions and delivers the ions to the membrane domain of KdpB through an intramembrane tunnel. This is Potassium-transporting ATPase potassium-binding subunit from Escherichia coli O9:H4 (strain HS).